The primary structure comprises 181 residues: uncharacterized protein (181 aa).

Positions 162–181 are disordered; it reads QARGPAGTRTPQRRCSSHEA.

This is an uncharacterized protein from Homo sapiens (Human).